We begin with the raw amino-acid sequence, 217 residues long: Large ribosomal subunit protein uL16 (217 aa).

Belongs to the universal ribosomal protein uL16 family. In terms of assembly, component of the small ribosomal subunit. Mature ribosomes consist of a small (40S) and a large (60S) subunit. The 40S subunit contains about 33 different proteins and 1 molecule of RNA (18S). The 60S subunit contains about 49 different proteins and 3 molecules of RNA (25S, 5.8S and 5S).

The protein is Large ribosomal subunit protein uL16 (rpl10) of Dictyostelium discoideum (Social amoeba).